Here is a 548-residue protein sequence, read N- to C-terminus: Esterase-5A (548 aa).

The signal sequence occupies residues 1-19 (MHLVRWLICLIQLWIQLGA). A disulfide bridge connects residues Cys-87 and Cys-106. Asn-95 and Asn-116 each carry an N-linked (GlcNAc...) asparagine glycan. Ser-210 acts as the Acyl-ester intermediate in catalysis. A disulfide bridge links Cys-262 with Cys-274. A glycan (N-linked (GlcNAc...) asparagine) is linked at Asn-479. Cys-518 and Cys-539 are oxidised to a cystine.

Belongs to the type-B carboxylesterase/lipase family.

Its subcellular location is the secreted. It catalyses the reaction a carboxylic ester + H2O = an alcohol + a carboxylate + H(+). The protein is Esterase-5A (Est-5A) of Drosophila persimilis (Fruit fly).